The primary structure comprises 546 residues: Chaperonin GroEL (546 aa).

ATP-binding positions include 30 to 33, K51, 87 to 91, G415, and D497; these read TLGP and DGTTT. A disordered region spans residues 527-546; that stretch reads PKKDSPAPAMPGGGMGGMDF. Over residues 537–546 the composition is skewed to gly residues; sequence PGGGMGGMDF.

The protein belongs to the chaperonin (HSP60) family. In terms of assembly, forms a cylinder of 14 subunits composed of two heptameric rings stacked back-to-back. Interacts with the co-chaperonin GroES.

The protein resides in the cytoplasm. It catalyses the reaction ATP + H2O + a folded polypeptide = ADP + phosphate + an unfolded polypeptide.. In terms of biological role, together with its co-chaperonin GroES, plays an essential role in assisting protein folding. The GroEL-GroES system forms a nano-cage that allows encapsulation of the non-native substrate proteins and provides a physical environment optimized to promote and accelerate protein folding. The protein is Chaperonin GroEL of Methylorubrum populi (strain ATCC BAA-705 / NCIMB 13946 / BJ001) (Methylobacterium populi).